Here is an 811-residue protein sequence, read N- to C-terminus: Glycerol-3-phosphate acyltransferase (811 aa).

An HXXXXD motif motif is present at residues 308–313 (CHRSHM).

It belongs to the GPAT/DAPAT family.

It is found in the cell inner membrane. It catalyses the reaction sn-glycerol 3-phosphate + an acyl-CoA = a 1-acyl-sn-glycero-3-phosphate + CoA. Its pathway is phospholipid metabolism; CDP-diacylglycerol biosynthesis; CDP-diacylglycerol from sn-glycerol 3-phosphate: step 1/3. This is Glycerol-3-phosphate acyltransferase from Pseudoalteromonas atlantica (strain T6c / ATCC BAA-1087).